Consider the following 276-residue polypeptide: Tyrosinase (276 aa).

Cu cation-binding residues include H38, H56, H66, H193, H197, and H219.

This sequence belongs to the tyrosinase family. The cofactor is Cu(2+).

It carries out the reaction 2 L-dopa + O2 = 2 L-dopaquinone + 2 H2O. The enzyme catalyses L-tyrosine + O2 = L-dopaquinone + H2O. Its function is as follows. This is a copper-containing oxidase that functions in the formation of pigments such as melanins and other polyphenolic compounds. The protein is Tyrosinase (melC2) of Streptomyces galbus.